Consider the following 154-residue polypeptide: Myoglobin (154 aa).

Residues 2 to 148 (GLSDGEWQLV…FRNEMAAQYK (147 aa)) form the Globin domain. Position 4 is a phosphoserine (S4). Residue H65 participates in nitrite binding. H65 provides a ligand contact to O2. T68 carries the post-translational modification Phosphothreonine. H94 is a heme b binding site.

As to quaternary structure, monomeric.

It localises to the cytoplasm. The protein localises to the sarcoplasm. The catalysed reaction is Fe(III)-heme b-[protein] + nitric oxide + H2O = Fe(II)-heme b-[protein] + nitrite + 2 H(+). The enzyme catalyses H2O2 + AH2 = A + 2 H2O. In terms of biological role, monomeric heme protein which primary function is to store oxygen and facilitate its diffusion within muscle tissues. Reversibly binds oxygen through a pentacoordinated heme iron and enables its timely and efficient release as needed during periods of heightened demand. Depending on the oxidative conditions of tissues and cells, and in addition to its ability to bind oxygen, it also has a nitrite reductase activity whereby it regulates the production of bioactive nitric oxide. Under stress conditions, like hypoxia and anoxia, it also protects cells against reactive oxygen species thanks to its pseudoperoxidase activity. This is Myoglobin from Bubalus bubalis (Domestic water buffalo).